A 283-amino-acid chain; its full sequence is ATP synthase gamma chain (283 aa).

This sequence belongs to the ATPase gamma chain family. In terms of assembly, F-type ATPases have 2 components, CF(1) - the catalytic core - and CF(0) - the membrane proton channel. CF(1) has five subunits: alpha(3), beta(3), gamma(1), delta(1), epsilon(1). CF(0) has three main subunits: a, b and c.

Its subcellular location is the cell membrane. Its function is as follows. Produces ATP from ADP in the presence of a proton gradient across the membrane. The gamma chain is believed to be important in regulating ATPase activity and the flow of protons through the CF(0) complex. The sequence is that of ATP synthase gamma chain from Clostridium kluyveri (strain NBRC 12016).